We begin with the raw amino-acid sequence, 172 residues long: Small ribosomal subunit protein uS5 (172 aa).

One can recognise an S5 DRBM domain in the interval 16-79; sequence LKEKLVHINR…EDGKKNVIKV (64 aa).

The protein belongs to the universal ribosomal protein uS5 family. Part of the 30S ribosomal subunit. Contacts proteins S4 and S8.

In terms of biological role, with S4 and S12 plays an important role in translational accuracy. Located at the back of the 30S subunit body where it stabilizes the conformation of the head with respect to the body. The chain is Small ribosomal subunit protein uS5 from Chlorobium phaeobacteroides (strain DSM 266 / SMG 266 / 2430).